Reading from the N-terminus, the 591-residue chain is MSNYSVSLVGPAPWGFRLQGGKDFNMPLTISSLKDGGKASQAHVRIGDVVLSIDGISAQGMTHLEAQNKIKACTGSLNMTLQRASAAAKSEPVSVQKGEPKEVVKPVPITSPAVSKVTSTTNMAYNKAPRPFGSVSSPKVTSIPSPSSAFTPAHAATSSHASPTPVAAATPLHLSASGLHVSANLSADQCSSPPNTGKPAVNVPRQPTVTSVCSESAQELAEGQRRGSQGDIKQQNGPPRKHIVERNTEFYHIPTHSDASKKRLIEDTEDWRPRTGTTQSRSFRILAQITGTEHLTESENDNTKKANSTQEPSQQPASSGASPLSASEGPESPGSSRPSVAGLRSAAAFKPVGSTSVKSPSWQRPNQAAPSTGRISNNARSSGTGASVGPPQPSDQDTLVQRAEHIPAGKRTPMCAHCNQVIRGPFLVALGKSWHPEEFNCAHCKNTMAYIGFVEEKGALYCELCYEKFFAPECGRCQRKILGEVINALKQTWHVSCFVCVACGKPIRNNVFHLEDGEPYCETDYYALFGTICRGCEFPIEAGDMFLEALGYTWHDTCFVCSVCCESLEGQTFFSKKDKPLCKKHAHSVNF.

N-acetylserine is present on Ser-2. Position 2 is a phosphoserine (Ser-2). One can recognise a PDZ domain in the interval 2 to 85 (SNYSVSLVGP…SLNMTLQRAS (84 aa)). Lys-89 is modified (N6-acetyllysine; alternate). The residue at position 89 (Lys-89) is an N6-succinyllysine; alternate. A Glycyl lysine isopeptide (Lys-Gly) (interchain with G-Cter in SUMO2); alternate cross-link involves residue Lys-89. A phosphoserine mark is found at Glu-102, Lys-105, Ser-111, Ser-134, and Ser-137. Disordered regions lie at residues 121–166 (TNMA…PTPV) and 186–398 (SADQ…DQDT). Positions 134–143 (SVSSPKVTSI) are enriched in polar residues. Residues 144–166 (PSPSSAFTPAHAATSSHASPTPV) are compositionally biased toward low complexity. Polar residues-rich tracts occupy residues 186 to 195 (SADQCSSPPN) and 205 to 217 (RQPTVTSVCSESA). 3 positions are modified to phosphoserine: Gln-218, Ser-228, and Ser-260. 2 stretches are compositionally biased toward basic and acidic residues: residues 258–273 (DASKKRLIEDTEDWRP) and 294–304 (HLTESENDNTK). The segment covering 310 to 339 (QEPSQQPASSGASPLSASEGPESPGSSRPS) has biased composition (low complexity). Ser-313, Pro-316, and Ser-322 each carry phosphoserine. Lys-350 bears the N6-acetyllysine mark. Polar residues predominate over residues 353–385 (GSTSVKSPSWQRPNQAAPSTGRISNNARSSGTG). Phosphoserine occurs at positions 359 and 361. 3 LIM zinc-binding domains span residues 413–472 (PMCA…FFAP), 472–531 (PECG…LFGT), and 531–591 (TICR…SVNF).

As to quaternary structure, interacts with various PKC isoforms through the LIM domains. Interacts with actin and alpha-actinin through the PDZ domain. Interacts (via LIM domains) with SIPA1L1/SPAR; this interaction may occur preferentially with isoform 1.

The protein resides in the postsynaptic density. It localises to the presynapse. Its subcellular location is the postsynapse. The protein localises to the cytoplasm. It is found in the cytosol. Its function is as follows. May play an important role in the heart development by scaffolding PKC to the Z-disk region. May play a role in the regulation of cardiomyocyte expansion. Isoforms lacking the LIM domains may negatively modulate the scaffolding activity of isoform 1. Overexpression promotes the development of heart hypertrophy. Contributes to the regulation of dendritic spine morphogenesis in neurons. May be required to restrain postsynaptic growth of excitatory synapses. Isoform 1, but not isoform 2, expression favors spine thinning and elongation. This Mus musculus (Mouse) protein is PDZ and LIM domain protein 5.